A 471-amino-acid polypeptide reads, in one-letter code: Ribulose bisphosphate carboxylase large chain (471 aa).

K5 bears the N6,N6,N6-trimethyllysine mark. Positions 114 and 164 each coordinate substrate. K166 serves as the catalytic Proton acceptor. Residue K168 participates in substrate binding. Residues K192, D194, and E195 each coordinate Mg(2+). An N6-carboxylysine modification is found at K192. Residue H285 is the Proton acceptor of the active site. Residues R286, H318, and S370 each contribute to the substrate site.

It belongs to the RuBisCO large chain family. Type I subfamily. Heterohexadecamer of 8 large chains and 8 small chains; disulfide-linked. The disulfide link is formed within the large subunit homodimers. The cofactor is Mg(2+). In terms of processing, the disulfide bond which can form in the large chain dimeric partners within the hexadecamer appears to be associated with oxidative stress and protein turnover.

Its subcellular location is the plastid. It localises to the chloroplast. It catalyses the reaction 2 (2R)-3-phosphoglycerate + 2 H(+) = D-ribulose 1,5-bisphosphate + CO2 + H2O. The catalysed reaction is D-ribulose 1,5-bisphosphate + O2 = 2-phosphoglycolate + (2R)-3-phosphoglycerate + 2 H(+). Functionally, ruBisCO catalyzes two reactions: the carboxylation of D-ribulose 1,5-bisphosphate, the primary event in carbon dioxide fixation, as well as the oxidative fragmentation of the pentose substrate in the photorespiration process. Both reactions occur simultaneously and in competition at the same active site. In Chiococca alba (West Indian milkberry), this protein is Ribulose bisphosphate carboxylase large chain.